A 142-amino-acid polypeptide reads, in one-letter code: Serine/threonine-protein kinase BtrW (142 aa).

Belongs to the anti-sigma-factor family. In terms of assembly, probably able to multimerize; interacts with BtrV.

It catalyses the reaction L-seryl-[protein] + ATP = O-phospho-L-seryl-[protein] + ADP + H(+). It carries out the reaction L-threonyl-[protein] + ATP = O-phospho-L-threonyl-[protein] + ADP + H(+). In terms of biological role, possible negative regulator of sigma-B activity. Phosphorylates and inactivates its specific antagonist protein, BtrV. Upon phosphorylation of BtrV, BtrW is released and binds to an unknown partner(s) that might be sigma-B, thereby blocking its ability to form a complex with its partner (possibly an RNA polymerase holoenzyme (E-sigma-B)). Involved in type III secretion system (T3SS). Phosphorylates BtrV. This chain is Serine/threonine-protein kinase BtrW (btrW), found in Bordetella bronchiseptica (strain ATCC BAA-588 / NCTC 13252 / RB50) (Alcaligenes bronchisepticus).